We begin with the raw amino-acid sequence, 248 residues long: Agamous-like MADS-box protein AGL1 (248 aa).

The MADS-box domain occupies Arg18–Tyr72. The K-box domain maps to Thr102–Leu192.

As to quaternary structure, interacts with AGL15 and AGL16.

It localises to the nucleus. In terms of biological role, probable transcription factor. Interacts genetically with TT16/AGL32 in a partially antagonistic manner during flower development. Is essential for the coordination of cell divisions in ovule, seed coat development and endosperm formation. The protein is Agamous-like MADS-box protein AGL1 (AGL1) of Arabidopsis thaliana (Mouse-ear cress).